Reading from the N-terminus, the 512-residue chain is 2-isopropylmalate synthase (512 aa).

The Pyruvate carboxyltransferase domain occupies 4–266 (IQFFDTTLRD…ETNIVLNQFK (263 aa)). Mn(2+) contacts are provided by Asp13, His201, His203, and Asn237. The tract at residues 390 to 512 (ELKHLQVQYV…SKQADFEEVK (123 aa)) is regulatory domain.

The protein belongs to the alpha-IPM synthase/homocitrate synthase family. LeuA type 1 subfamily. Homodimer. It depends on Mn(2+) as a cofactor.

The protein resides in the cytoplasm. The catalysed reaction is 3-methyl-2-oxobutanoate + acetyl-CoA + H2O = (2S)-2-isopropylmalate + CoA + H(+). The protein operates within amino-acid biosynthesis; L-leucine biosynthesis; L-leucine from 3-methyl-2-oxobutanoate: step 1/4. Catalyzes the condensation of the acetyl group of acetyl-CoA with 3-methyl-2-oxobutanoate (2-ketoisovalerate) to form 3-carboxy-3-hydroxy-4-methylpentanoate (2-isopropylmalate). This is 2-isopropylmalate synthase from Listeria monocytogenes serotype 4b (strain CLIP80459).